The following is a 535-amino-acid chain: Probable anion transporter 2, chloroplastic (535 aa).

The transit peptide at 1–95 (MASIRSCVSV…RERAVAAMCS (95 aa)) directs the protein to the chloroplast. Helical transmembrane passes span 125 to 145 (VVALVAAVMLLCNADRVVMSV), 160 to 180 (FLGIVQSSFLWGYVFSSMVGG), 191 to 211 (VMAGAAALWSLATFLTPWAAS), 215 to 235 (IMLLAIRALFGLAEGVAFPTM), 254 to 274 (ISMGGFHLGNVISFLATPIIM), 279 to 299 (LAGTFAFFASLGYLWLSVWLF), 343 to 363 (IEMWAIIVANVVNNWGYFVLL), 381 to 401 (AAWFSAIPWAVMALSGYVAGA), 413 to 433 (VALVRKIMQSIGFIGPGVSLL), 443 to 463 (VAAVLMTIALSLSSFSQAGYF), 483 to 503 (GIGTVAAIVSTIGTGYFVQWL), and 504 to 524 (GSFQAFLTLTAVLYFSATVFY).

Belongs to the major facilitator superfamily. Sodium/anion cotransporter (TC 2.A.1.14) family.

It is found in the plastid. The protein resides in the chloroplast membrane. In terms of biological role, probable anion transporter. The polypeptide is Probable anion transporter 2, chloroplastic (PHT4;2) (Oryza sativa subsp. japonica (Rice)).